Here is a 309-residue protein sequence, read N- to C-terminus: Ribosomal RNA small subunit methyltransferase H (309 aa).

S-adenosyl-L-methionine is bound by residues 33-35 (GGH), D53, F79, D100, and Q107.

This sequence belongs to the methyltransferase superfamily. RsmH family.

The protein resides in the cytoplasm. The catalysed reaction is cytidine(1402) in 16S rRNA + S-adenosyl-L-methionine = N(4)-methylcytidine(1402) in 16S rRNA + S-adenosyl-L-homocysteine + H(+). Its function is as follows. Specifically methylates the N4 position of cytidine in position 1402 (C1402) of 16S rRNA. This is Ribosomal RNA small subunit methyltransferase H from Clostridium botulinum (strain ATCC 19397 / Type A).